Consider the following 94-residue polypeptide: Small ribosomal subunit protein bS18 (94 aa).

Positions 1–11 (MANERPTSQQR) are enriched in polar residues. Residues 1–24 (MANERPTSQQRPAGGPRKRRPFQR) are disordered.

It belongs to the bacterial ribosomal protein bS18 family. As to quaternary structure, part of the 30S ribosomal subunit. Forms a tight heterodimer with protein bS6.

Functionally, binds as a heterodimer with protein bS6 to the central domain of the 16S rRNA, where it helps stabilize the platform of the 30S subunit. This is Small ribosomal subunit protein bS18 from Pelobacter propionicus (strain DSM 2379 / NBRC 103807 / OttBd1).